Here is a 349-residue protein sequence, read N- to C-terminus: Magnesium-protoporphyrin IX monomethyl ester [oxidative] cyclase (349 aa).

The segment covering 1–10 (MTATTATAPT) has biased composition (low complexity). The disordered stretch occupies residues 1 to 23 (MTATTATAPTMRGGGRNELPPHL).

The protein belongs to the AcsF family. Requires Fe cation as cofactor.

It carries out the reaction Mg-protoporphyrin IX 13-monomethyl ester + 3 NADPH + 3 O2 + 2 H(+) = 3,8-divinyl protochlorophyllide a + 3 NADP(+) + 5 H2O. It functions in the pathway porphyrin-containing compound metabolism; chlorophyll biosynthesis (light-independent). Its function is as follows. Catalyzes the formation of the isocyclic ring in chlorophyll biosynthesis. Mediates the cyclase reaction, which results in the formation of divinylprotochlorophyllide (Pchlide) characteristic of all chlorophylls from magnesium-protoporphyrin IX 13-monomethyl ester (MgPMME). The polypeptide is Magnesium-protoporphyrin IX monomethyl ester [oxidative] cyclase (Prochlorococcus marinus (strain MIT 9313)).